The primary structure comprises 137 residues: Protein LTO1 homolog (137 aa).

At Ala-2 the chain carries N-acetylalanine. Positions 22-58 (GYQEGYEEGSSLGIVEGKRYGMVHGAKIGSEIGCYRG) are deca-GX3 motif; required for interaction with YAE1 and the CIA complex.

It belongs to the LTO1 family. As to quaternary structure, forms a complex with YAE1. Interacts with PYCR1 and PYCR2.

It localises to the nucleus. The complex LTO1:YAE1 functions as a target specific adapter that probably recruits apo-ABCE1 to the cytosolic iron-sulfur protein assembly (CIA) complex machinery. May be required for biogenesis of the large ribosomal subunit and initiation of translation. May play a role in the regulation of proline metabolism and ROS production. In Mus musculus (Mouse), this protein is Protein LTO1 homolog.